The following is a 346-amino-acid chain: Sensor protein kinase GraS (346 aa).

The next 2 membrane-spanning stretches (helical) occupy residues 18–38 and 43–63; these read IFWILFLNILMLGISLIDYDF and LFYIVSLNLSLTLIFLILTFF. Positions 126 to 332 constitute a Histidine kinase domain; sequence EFVHDIKTPV…TVKLIFPLQN (207 aa).

As to quaternary structure, interacts with GraX.

The protein resides in the cell membrane. It catalyses the reaction ATP + protein L-histidine = ADP + protein N-phospho-L-histidine.. In terms of biological role, member of the two-component regulatory system GraR/GraS involved in resistance against cationic antimicrobial peptides (CAMPs). Functions as a sensor protein kinase which phosphorylates GraR through the auxiliary protein GraX. In turn, GraR up-regulates many genes such as adhesins, exoproteins, transporters, toxins, and proteins involved in cell wall synthesis. Down-regulates the expression of many genes involved in RNA and amino acid synthesis or glycolysis. The polypeptide is Sensor protein kinase GraS (graS) (Staphylococcus aureus (strain MRSA252)).